The primary structure comprises 159 residues: Ribosomal RNA large subunit methyltransferase H (159 aa).

S-adenosyl-L-methionine-binding positions include leucine 76, glycine 108, and 127–132 (MSKMTF).

This sequence belongs to the RNA methyltransferase RlmH family. As to quaternary structure, homodimer.

It is found in the cytoplasm. It catalyses the reaction pseudouridine(1915) in 23S rRNA + S-adenosyl-L-methionine = N(3)-methylpseudouridine(1915) in 23S rRNA + S-adenosyl-L-homocysteine + H(+). In terms of biological role, specifically methylates the pseudouridine at position 1915 (m3Psi1915) in 23S rRNA. This is Ribosomal RNA large subunit methyltransferase H from Ureaplasma parvum serovar 3 (strain ATCC 27815 / 27 / NCTC 11736).